Reading from the N-terminus, the 214-residue chain is Large ribosomal subunit protein bL25 (214 aa).

Belongs to the bacterial ribosomal protein bL25 family. CTC subfamily. As to quaternary structure, part of the 50S ribosomal subunit; part of the 5S rRNA/L5/L18/L25 subcomplex. Contacts the 5S rRNA. Binds to the 5S rRNA independently of L5 and L18.

Functionally, this is one of the proteins that binds to the 5S RNA in the ribosome where it forms part of the central protuberance. The protein is Large ribosomal subunit protein bL25 of Polynucleobacter necessarius subsp. necessarius (strain STIR1).